Here is a 146-residue protein sequence, read N- to C-terminus: Protein new-glue 3 (146 aa).

Positions 1–23 are cleaved as a signal peptide; that stretch reads MRYSCVLLLLATVACLLIPQTGG. Residues 23 to 146 are disordered; the sequence is GSTATTTSTS…RRARSARRLS (124 aa). Low complexity predominate over residues 24–66; it reads STATTTSTSASATTTTSASATTTTASDTTTTTAATTTTSSSSS. 4 tandem repeats follow at residues 31–38, 39–46, 47–53, and 54–61. Positions 31 to 61 are 4 X 8 AA approximate tandem repeats of T-S-A-S-A-T-T-T; sequence TSASATTTTSASATTTTASDTTTTTAATTTT. The span at 67 to 92 shows a compositional bias: basic residues; it reads KSKKKKRTYHYTRHVYRPKRIRHIYR. A compositionally biased stretch (basic and acidic residues) spans 93–106; it reads HKADDDESSTDRTS. The segment covering 116-132 has biased composition (low complexity); it reads SSSSSSSGSTSSRSGNS. Residues 133 to 146 show a composition bias toward basic residues; it reads RIRRRRARSARRLS.

In terms of tissue distribution, salivary gland specific.

It is found in the secreted. The chain is Protein new-glue 3 (ng3) from Drosophila melanogaster (Fruit fly).